The following is a 237-amino-acid chain: Ribonuclease 3 (237 aa).

The RNase III domain occupies I7–G135. E48 provides a ligand contact to Mg(2+). The active site involves D52. The Mg(2+) site is built by N121 and E124. E124 is an active-site residue. The DRBM domain occupies N160–Y229.

This sequence belongs to the ribonuclease III family. In terms of assembly, homodimer. It depends on Mg(2+) as a cofactor.

The protein localises to the cytoplasm. The catalysed reaction is Endonucleolytic cleavage to 5'-phosphomonoester.. Digests double-stranded RNA. Involved in the processing of primary rRNA transcript to yield the immediate precursors to the large and small rRNAs (23S and 16S). Processes some mRNAs, and tRNAs when they are encoded in the rRNA operon. Processes pre-crRNA and tracrRNA of type II CRISPR loci if present in the organism. This Chlamydia felis (strain Fe/C-56) (Chlamydophila felis) protein is Ribonuclease 3.